The following is a 79-amino-acid chain: Acyl carrier protein 1 (79 aa).

Residues 2–77 (DNIEQRVKKI…QAIDYARANV (76 aa)) form the Carrier domain. O-(pantetheine 4'-phosphoryl)serine is present on serine 37.

Belongs to the acyl carrier protein (ACP) family. In terms of processing, 4'-phosphopantetheine is transferred from CoA to a specific serine of apo-ACP by AcpS. This modification is essential for activity because fatty acids are bound in thioester linkage to the sulfhydryl of the prosthetic group.

The protein resides in the cytoplasm. It functions in the pathway lipid metabolism; fatty acid biosynthesis. Functionally, carrier of the growing fatty acid chain in fatty acid biosynthesis. The protein is Acyl carrier protein 1 of Ralstonia nicotianae (strain ATCC BAA-1114 / GMI1000) (Ralstonia solanacearum).